The sequence spans 613 residues: Dihydroxy-acid dehydratase (613 aa).

Mg(2+) is bound at residue aspartate 81. Cysteine 122 is a [2Fe-2S] cluster binding site. Mg(2+) is bound by residues aspartate 123 and lysine 124. N6-carboxylysine is present on lysine 124. Cysteine 195 contacts [2Fe-2S] cluster. Position 491 (glutamate 491) interacts with Mg(2+). The active-site Proton acceptor is the serine 517.

The protein belongs to the IlvD/Edd family. Homodimer. Requires [2Fe-2S] cluster as cofactor. It depends on Mg(2+) as a cofactor.

The enzyme catalyses (2R)-2,3-dihydroxy-3-methylbutanoate = 3-methyl-2-oxobutanoate + H2O. It catalyses the reaction (2R,3R)-2,3-dihydroxy-3-methylpentanoate = (S)-3-methyl-2-oxopentanoate + H2O. It functions in the pathway amino-acid biosynthesis; L-isoleucine biosynthesis; L-isoleucine from 2-oxobutanoate: step 3/4. The protein operates within amino-acid biosynthesis; L-valine biosynthesis; L-valine from pyruvate: step 3/4. Functions in the biosynthesis of branched-chain amino acids. Catalyzes the dehydration of (2R,3R)-2,3-dihydroxy-3-methylpentanoate (2,3-dihydroxy-3-methylvalerate) into 2-oxo-3-methylpentanoate (2-oxo-3-methylvalerate) and of (2R)-2,3-dihydroxy-3-methylbutanoate (2,3-dihydroxyisovalerate) into 2-oxo-3-methylbutanoate (2-oxoisovalerate), the penultimate precursor to L-isoleucine and L-valine, respectively. The chain is Dihydroxy-acid dehydratase from Photobacterium profundum (strain SS9).